Here is a 134-residue protein sequence, read N- to C-terminus: Transcription antitermination protein NusB (134 aa).

The protein belongs to the NusB family.

Involved in transcription antitermination. Required for transcription of ribosomal RNA (rRNA) genes. Binds specifically to the boxA antiterminator sequence of the ribosomal RNA (rrn) operons. The polypeptide is Transcription antitermination protein NusB (Halalkalibacterium halodurans (strain ATCC BAA-125 / DSM 18197 / FERM 7344 / JCM 9153 / C-125) (Bacillus halodurans)).